We begin with the raw amino-acid sequence, 63 residues long: Cytochrome c oxidase subunit 7C, mitochondrial (63 aa).

The N-terminal 16 residues, 1 to 16 (MLGHSIRRFTTSVVRR), are a transit peptide targeting the mitochondrion. Topologically, residues 17–33 (SHYEEGPGKNLPFSVEN) are mitochondrial matrix. Lys25 carries the N6-acetyllysine; alternate modification. At Lys25 the chain carries N6-succinyllysine; alternate. The chain crosses the membrane as a helical span at residues 34–60 (KWTLLVKMCLFFGSAFSVPFLIVRHQL). Over 61 to 63 (LKQ) the chain is Mitochondrial intermembrane.

This sequence belongs to the cytochrome c oxidase VIIc family. As to quaternary structure, component of the cytochrome c oxidase (complex IV, CIV), a multisubunit enzyme composed of 14 subunits. The complex is composed of a catalytic core of 3 subunits MT-CO1, MT-CO2 and MT-CO3, encoded in the mitochondrial DNA, and 11 supernumerary subunits COX4I, COX5A, COX5B, COX6A, COX6B, COX6C, COX7A, COX7B, COX7C, COX8 and NDUFA4, which are encoded in the nuclear genome. The complex exists as a monomer or a dimer and forms supercomplexes (SCs) in the inner mitochondrial membrane with NADH-ubiquinone oxidoreductase (complex I, CI) and ubiquinol-cytochrome c oxidoreductase (cytochrome b-c1 complex, complex III, CIII), resulting in different assemblies (supercomplex SCI(1)III(2)IV(1) and megacomplex MCI(2)III(2)IV(2)). Interacts with RAB5IF.

The protein resides in the mitochondrion inner membrane. The protein operates within energy metabolism; oxidative phosphorylation. Its function is as follows. Component of the cytochrome c oxidase, the last enzyme in the mitochondrial electron transport chain which drives oxidative phosphorylation. The respiratory chain contains 3 multisubunit complexes succinate dehydrogenase (complex II, CII), ubiquinol-cytochrome c oxidoreductase (cytochrome b-c1 complex, complex III, CIII) and cytochrome c oxidase (complex IV, CIV), that cooperate to transfer electrons derived from NADH and succinate to molecular oxygen, creating an electrochemical gradient over the inner membrane that drives transmembrane transport and the ATP synthase. Cytochrome c oxidase is the component of the respiratory chain that catalyzes the reduction of oxygen to water. Electrons originating from reduced cytochrome c in the intermembrane space (IMS) are transferred via the dinuclear copper A center (CU(A)) of subunit 2 and heme A of subunit 1 to the active site in subunit 1, a binuclear center (BNC) formed by heme A3 and copper B (CU(B)). The BNC reduces molecular oxygen to 2 water molecules using 4 electrons from cytochrome c in the IMS and 4 protons from the mitochondrial matrix. This chain is Cytochrome c oxidase subunit 7C, mitochondrial (COX7C), found in Macaca fascicularis (Crab-eating macaque).